The primary structure comprises 157 residues: Ribosome maturation factor RimP (157 aa).

This sequence belongs to the RimP family.

It is found in the cytoplasm. Required for maturation of 30S ribosomal subunits. In Synechococcus sp. (strain JA-3-3Ab) (Cyanobacteria bacterium Yellowstone A-Prime), this protein is Ribosome maturation factor RimP.